We begin with the raw amino-acid sequence, 742 residues long: ATP-dependent RNA helicase DBP7 (742 aa).

A disordered region spans residues 45 to 100 (GKTVSRKRKANTTGDEGIIPGRGENSIKKLHKESSYSSEEQEKYKGRNAHNTQGRT). A Q motif motif is present at residues 143–172 (DQFASLGVTSLLVSHLEQKMRIKKPTSIQK). Residues 178–372 (IIGNAGKNDF…NVALKDYKLI (195 aa)) form the Helicase ATP-binding domain. An ATP-binding site is contributed by 191–198 (AQTGSGKT). The DEAD box motif lies at 307–310 (DEGD). The region spanning 405–605 (TLAATLNNIT…ILMPAFKDVN (201 aa)) is the Helicase C-terminal domain. Residues 701 to 726 (AMGLQSSKDGNSEKKPTKENSKNKMF) form a disordered region. Residues 710-722 (GNSEKKPTKENSK) are compositionally biased toward basic and acidic residues.

The protein belongs to the DEAD box helicase family. DDX31/DBP7 subfamily.

Its subcellular location is the nucleus. The protein localises to the nucleolus. It catalyses the reaction ATP + H2O = ADP + phosphate + H(+). Functionally, ATP-binding RNA helicase involved in the biogenesis of 60S ribosomal subunits and is required for the normal formation of 25S and 5.8S rRNAs. This Saccharomyces cerevisiae (strain YJM789) (Baker's yeast) protein is ATP-dependent RNA helicase DBP7 (DBP7).